The chain runs to 468 residues: Phosphoglucosamine mutase (468 aa).

Ser-112 acts as the Phosphoserine intermediate in catalysis. Residues Ser-112, Asp-254, Asp-256, and Asp-258 each coordinate Mg(2+). Ser-112 carries the phosphoserine modification.

Belongs to the phosphohexose mutase family. Requires Mg(2+) as cofactor. Post-translationally, activated by phosphorylation.

It carries out the reaction alpha-D-glucosamine 1-phosphate = D-glucosamine 6-phosphate. Functionally, catalyzes the conversion of glucosamine-6-phosphate to glucosamine-1-phosphate. The protein is Phosphoglucosamine mutase of Prochlorococcus marinus (strain MIT 9313).